We begin with the raw amino-acid sequence, 855 residues long: Beta-mannosidase B (855 aa).

Asn-98 is a glycosylation site (N-linked (GlcNAc...) asparagine). Glu-430 serves as the catalytic Proton donor. Residues Asn-693 and Asn-730 are each glycosylated (N-linked (GlcNAc...) asparagine).

This sequence belongs to the glycosyl hydrolase 2 family. Beta-mannosidase B subfamily. Homodimer.

The protein resides in the secreted. It catalyses the reaction Hydrolysis of terminal, non-reducing beta-D-mannose residues in beta-D-mannosides.. It participates in glycan metabolism; N-glycan degradation. In terms of biological role, exoglycosidase that cleaves the single beta-linked mannose residue from the non-reducing end of beta-mannosidic oligosaccharides of various complexity and length. Prefers mannobiose over mannotriose. Is also severely restricted by galactosyl substitutions at the +1 subsite. Has no activity against polymeric mannan. This chain is Beta-mannosidase B (man9), found in Thermothelomyces thermophilus (Myceliophthora thermophila).